The sequence spans 129 residues: Protein Turandot B2 (129 aa).

The first 21 residues, 1-21 (MNSATSLMCFALLLISPLCMG), serve as a signal peptide directing secretion.

The protein belongs to the Turandot family.

The protein resides in the secreted. Functionally, a humoral factor that may play a role in stress tolerance. This chain is Protein Turandot B2 (TotB2), found in Drosophila erecta (Fruit fly).